The following is a 400-amino-acid chain: Coiled-coil domain-containing glutamate-rich protein 1 (400 aa).

The segment covering methionine 1–proline 11 has biased composition (basic and acidic residues). Disordered regions lie at residues methionine 1–proline 68, arginine 134–aspartate 164, and glutamine 203–leucine 353. A compositionally biased stretch (basic residues) spans tyrosine 31–tyrosine 45. Over residues arginine 46–arginine 57 the composition is skewed to basic and acidic residues. The segment covering glycine 137–phenylalanine 157 has biased composition (basic residues). The segment covering glutamine 209 to alanine 220 has biased composition (low complexity). The span at proline 255–threonine 271 shows a compositional bias: polar residues. Acidic residues predominate over residues valine 275–arginine 347. A coiled-coil region spans residues glutamate 299–valine 335.

It localises to the nucleus. In terms of biological role, regulator of histone epigenetic modifications and chromatin compaction into the sperm head, required for histone-to-protamine (HTP) transition. HTP is a key event in which somatic histones are first replaced by testis-specific histone variants, then transition proteins (TNPs) are incorporated into the spermatid nucleus, and finally protamines (PRMs) replace the TNPs to promote chromatin condensation. In Rattus norvegicus (Rat), this protein is Coiled-coil domain-containing glutamate-rich protein 1 (Ccer1).